Consider the following 524-residue polypeptide: CDC50-related protein CDC50.1 (524 aa).

2 stretches are compositionally biased toward polar residues: residues 1 to 19 (MGEN…SQFS) and 26 to 39 (TLSS…QQSL). Disordered stretches follow at residues 1–40 (MGEN…QSLP) and 52–86 (APSV…DAGS). The Cytoplasmic segment spans residues 1-181 (MGENSTTGLR…GMYPLWSAGV (181 aa)). The segment covering 67-80 (GSSRLTSRGTSLSS) has biased composition (low complexity). A helical transmembrane segment spans residues 182–202 (VLRLCLLGALFFVSVGAWLIF). Over 203–473 (EDEQHVECKL…VQKSRLGGRS (271 aa)) the chain is Extracellular. N-linked (GlcNAc...) asparagine glycans are attached at residues asparagine 297 and asparagine 339. Residues 474–494 (LFIGIAYLSFGCLLTMLVFYM) traverse the membrane as a helical segment. Topologically, residues 495–524 (LWKKWQYRREGEEIRDLRWQTKTRGSKKTK) are cytoplasmic.

This sequence belongs to the CDC50/LEM3 family. Interacts with GC; the interaction regulates guanylate cyclase GC trafficking and sensing environmental changes.

It is found in the membrane. Functionally, in tachyzoites, required for the cellular trafficking of guanylate cyclase GC and UGO to the cell membrane. May play a role in the folding of the GC P-type ATPase-like domain to sense vacuolar changes in phosphatidic acid and pH levels which trigger parasite egress. The chain is CDC50-related protein CDC50.1 from Toxoplasma gondii (strain ATCC 50853 / GT1).